The following is a 688-amino-acid chain: Coiled-coil domain-containing protein 157 (688 aa).

A compositionally biased stretch (polar residues) spans 143-153 (ANQGETLTSKP). Disordered regions lie at residues 143-162 (ANQGETLTSKPTAKGEPAGS), 168-189 (AQLVKPPSPVPGLPQACPERDS), 322-341 (QAARQRQAQEAEQHRAQWER), 366-385 (QQRESTQAVESKAQQLQAEA), and 592-688 (QGAE…ERPT). Residues 288–572 (KLVGLLRAQL…LSKIREVAQQ (285 aa)) are a coiled coil. A compositionally biased stretch (polar residues) spans 369 to 382 (ESTQAVESKAQQLQ). The segment covering 671-680 (SPSSGRASPA) has biased composition (low complexity).

This chain is Coiled-coil domain-containing protein 157 (CCDC157), found in Bos taurus (Bovine).